Here is a 110-residue protein sequence, read N- to C-terminus: MSDTFQRIAPEQVRQLRENGAQVVDIRDPQSFAVGHISGSRHIDNHSVADFIAAADLDAPLVVVCYHGNSSQSAAAYFIQQGFSDVYSLDGGFELWRSVYPADTSSGEAE.

The region spanning 17-105 is the Rhodanese domain; sequence RENGAQVVDI…WRSVYPADTS (89 aa). Cys-65 functions as the Cysteine persulfide intermediate in the catalytic mechanism.

Belongs to the GlpE family.

Its subcellular location is the cytoplasm. The catalysed reaction is thiosulfate + hydrogen cyanide = thiocyanate + sulfite + 2 H(+). It carries out the reaction thiosulfate + [thioredoxin]-dithiol = [thioredoxin]-disulfide + hydrogen sulfide + sulfite + 2 H(+). In terms of biological role, transferase that catalyzes the transfer of sulfur from thiosulfate to thiophilic acceptors such as cyanide or dithiols. May function in a CysM-independent thiosulfate assimilation pathway by catalyzing the conversion of thiosulfate to sulfite, which can then be used for L-cysteine biosynthesis. The chain is Thiosulfate sulfurtransferase GlpE from Pseudomonas aeruginosa (strain ATCC 15692 / DSM 22644 / CIP 104116 / JCM 14847 / LMG 12228 / 1C / PRS 101 / PAO1).